Reading from the N-terminus, the 156-residue chain is Aspartate carbamoyltransferase regulatory chain (156 aa).

Cysteine 110, cysteine 115, cysteine 140, and cysteine 143 together coordinate Zn(2+).

It belongs to the PyrI family. In terms of assembly, contains catalytic and regulatory chains. Requires Zn(2+) as cofactor.

In terms of biological role, involved in allosteric regulation of aspartate carbamoyltransferase. The sequence is that of Aspartate carbamoyltransferase regulatory chain from Methanocella arvoryzae (strain DSM 22066 / NBRC 105507 / MRE50).